The chain runs to 349 residues: Very-long-chain 3-oxoacyl-CoA reductase (349 aa).

Residues Ala19–Ala39 form a helical membrane-spanning segment. The NADP(+) site is built by Val65, Asp119, Asn146, Tyr221, Lys225, Val254, and Ser256. Tyr221 acts as the Proton donor in catalysis. Lys225 functions as the Lowers pKa of active site Tyr in the catalytic mechanism.

Belongs to the short-chain dehydrogenases/reductases (SDR) family.

It is found in the endoplasmic reticulum membrane. It carries out the reaction a very-long-chain (3R)-3-hydroxyacyl-CoA + NADP(+) = a very-long-chain 3-oxoacyl-CoA + NADPH + H(+). The protein operates within lipid metabolism; fatty acid biosynthesis. Functionally, component of the microsomal membrane bound fatty acid elongation system, which produces the 26-carbon very long-chain fatty acids (VLCFA) from palmitate. Catalyzes the reduction of the 3-ketoacyl-CoA intermediate that is formed in each cycle of fatty acid elongation. VLCFAs serve as precursors for ceramide and sphingolipids. The sequence is that of Very-long-chain 3-oxoacyl-CoA reductase from Candida albicans (strain SC5314 / ATCC MYA-2876) (Yeast).